A 502-amino-acid polypeptide reads, in one-letter code: Probable glycine dehydrogenase (decarboxylating) subunit 2 (502 aa).

The residue at position 273 (lysine 273) is an N6-(pyridoxal phosphate)lysine.

It belongs to the GcvP family. C-terminal subunit subfamily. In terms of assembly, the glycine cleavage system is composed of four proteins: P, T, L and H. In this organism, the P 'protein' is a heterodimer of two subunits. The cofactor is pyridoxal 5'-phosphate.

It carries out the reaction N(6)-[(R)-lipoyl]-L-lysyl-[glycine-cleavage complex H protein] + glycine + H(+) = N(6)-[(R)-S(8)-aminomethyldihydrolipoyl]-L-lysyl-[glycine-cleavage complex H protein] + CO2. In terms of biological role, the glycine cleavage system catalyzes the degradation of glycine. The P protein binds the alpha-amino group of glycine through its pyridoxal phosphate cofactor; CO(2) is released and the remaining methylamine moiety is then transferred to the lipoamide cofactor of the H protein. This is Probable glycine dehydrogenase (decarboxylating) subunit 2 from Staphylococcus epidermidis (strain ATCC 35984 / DSM 28319 / BCRC 17069 / CCUG 31568 / BM 3577 / RP62A).